The following is a 400-amino-acid chain: SEC14-like protein 3 (400 aa).

The CRAL-TRIO domain maps to 76–249 (PPEVIQKYMP…HFGGTLTDPD (174 aa)). The residue at position 223 (Ser-223) is a Phosphoserine. A GOLD domain is found at 275 to 383 (KTQYEHSVQI…AKKVSFTVEV (109 aa)).

Post-translationally, the N-terminus seems to be blocked. As to expression, detected in a layer of supportive cells in olfactory epithelium, in the apical region of the trachea and in the surface layer of ciliated bronchial epithelium in the lung.

Probable hydrophobic ligand-binding protein; may play a role in the transport of hydrophobic ligands like tocopherol, squalene and phospholipids. This is SEC14-like protein 3 (Sec14l3) from Rattus norvegicus (Rat).